The primary structure comprises 231 residues: Cuticle protein LPCP-23 (231 aa).

The first 17 residues, 1-17 (MAFKFVVFAAALAYANA), serve as a signal peptide directing secretion. A run of 2 repeats spans residues 130–133 (AAPV) and 199–202 (AAPV).

Functionally, component of the cuticle of Tenebrio molitor. The protein is Cuticle protein LPCP-23 (LPCP-23) of Tenebrio molitor (Yellow mealworm beetle).